A 535-amino-acid polypeptide reads, in one-letter code: CTP synthase (535 aa).

The amidoligase domain stretch occupies residues 1-267; the sequence is MTKFIFVTGG…DDIVIKRLDL (267 aa). Serine 13 lines the CTP pocket. Residue serine 13 coordinates UTP. 14–19 provides a ligand contact to ATP; it reads SLGKGI. Tyrosine 54 provides a ligand contact to L-glutamine. An ATP-binding site is contributed by aspartate 71. Aspartate 71 and glutamate 141 together coordinate Mg(2+). CTP-binding positions include 148–150, 188–193, and lysine 224; these read DIE and KTKPTQ. UTP is bound by residues 188–193 and lysine 224; that span reads KTKPTQ. An ATP-binding site is contributed by 240-242; that stretch reads RDA. Residues 293–535 enclose the Glutamine amidotransferase type-1 domain; it reads TIGLVGKYVS…VEAAYKHQNK (243 aa). Glycine 355 is an L-glutamine binding site. Cysteine 382 acts as the Nucleophile; for glutamine hydrolysis in catalysis. L-glutamine contacts are provided by residues 383–386, glutamate 406, and arginine 463; that span reads LGMQ. Active-site residues include histidine 508 and glutamate 510.

It belongs to the CTP synthase family. As to quaternary structure, homotetramer.

The catalysed reaction is UTP + L-glutamine + ATP + H2O = CTP + L-glutamate + ADP + phosphate + 2 H(+). It carries out the reaction L-glutamine + H2O = L-glutamate + NH4(+). It catalyses the reaction UTP + NH4(+) + ATP = CTP + ADP + phosphate + 2 H(+). It functions in the pathway pyrimidine metabolism; CTP biosynthesis via de novo pathway; CTP from UDP: step 2/2. With respect to regulation, allosterically activated by GTP, when glutamine is the substrate; GTP has no effect on the reaction when ammonia is the substrate. The allosteric effector GTP functions by stabilizing the protein conformation that binds the tetrahedral intermediate(s) formed during glutamine hydrolysis. Inhibited by the product CTP, via allosteric rather than competitive inhibition. Catalyzes the ATP-dependent amination of UTP to CTP with either L-glutamine or ammonia as the source of nitrogen. Regulates intracellular CTP levels through interactions with the four ribonucleotide triphosphates. The chain is CTP synthase from Staphylococcus haemolyticus (strain JCSC1435).